The following is a 374-amino-acid chain: Methionine import ATP-binding protein MetN 2 (374 aa).

The 240-residue stretch at 32–271 (VRFVGLGKTY…PQHEVSQTLL (240 aa)) folds into the ABC transporter domain. 68 to 75 (GRSGAGKS) is a binding site for ATP.

It belongs to the ABC transporter superfamily. Methionine importer (TC 3.A.1.24) family. In terms of assembly, the complex is composed of two ATP-binding proteins (MetN), two transmembrane proteins (MetI) and a solute-binding protein (MetQ).

Its subcellular location is the cell inner membrane. The catalysed reaction is L-methionine(out) + ATP + H2O = L-methionine(in) + ADP + phosphate + H(+). The enzyme catalyses D-methionine(out) + ATP + H2O = D-methionine(in) + ADP + phosphate + H(+). In terms of biological role, part of the ABC transporter complex MetNIQ involved in methionine import. Responsible for energy coupling to the transport system. In Pseudomonas fluorescens (strain Pf0-1), this protein is Methionine import ATP-binding protein MetN 2.